The primary structure comprises 206 residues: Thiamine-phosphate synthase (206 aa).

Residues 37 to 41 (QYRNK) and Asn69 each bind 4-amino-2-methyl-5-(diphosphooxymethyl)pyrimidine. 2 residues coordinate Mg(2+): Asp70 and Asp89. Ser108 serves as a coordination point for 4-amino-2-methyl-5-(diphosphooxymethyl)pyrimidine. 135-137 (SST) is a 2-[(2R,5Z)-2-carboxy-4-methylthiazol-5(2H)-ylidene]ethyl phosphate binding site. Position 138 (Lys138) interacts with 4-amino-2-methyl-5-(diphosphooxymethyl)pyrimidine. 2-[(2R,5Z)-2-carboxy-4-methylthiazol-5(2H)-ylidene]ethyl phosphate is bound by residues Gly165 and 185–186 (IS).

It belongs to the thiamine-phosphate synthase family. Mg(2+) is required as a cofactor.

The catalysed reaction is 2-[(2R,5Z)-2-carboxy-4-methylthiazol-5(2H)-ylidene]ethyl phosphate + 4-amino-2-methyl-5-(diphosphooxymethyl)pyrimidine + 2 H(+) = thiamine phosphate + CO2 + diphosphate. It carries out the reaction 2-(2-carboxy-4-methylthiazol-5-yl)ethyl phosphate + 4-amino-2-methyl-5-(diphosphooxymethyl)pyrimidine + 2 H(+) = thiamine phosphate + CO2 + diphosphate. The enzyme catalyses 4-methyl-5-(2-phosphooxyethyl)-thiazole + 4-amino-2-methyl-5-(diphosphooxymethyl)pyrimidine + H(+) = thiamine phosphate + diphosphate. The protein operates within cofactor biosynthesis; thiamine diphosphate biosynthesis; thiamine phosphate from 4-amino-2-methyl-5-diphosphomethylpyrimidine and 4-methyl-5-(2-phosphoethyl)-thiazole: step 1/1. Its function is as follows. Condenses 4-methyl-5-(beta-hydroxyethyl)thiazole monophosphate (THZ-P) and 2-methyl-4-amino-5-hydroxymethyl pyrimidine pyrophosphate (HMP-PP) to form thiamine monophosphate (TMP). In Azoarcus sp. (strain BH72), this protein is Thiamine-phosphate synthase.